Consider the following 206-residue polypeptide: SOSS complex subunit B2 (206 aa).

Residues 26–89 (IVLEIGRVTK…SMWKGCLTLY (64 aa)) constitute a DNA-binding region (OB). Disordered regions lie at residues 114–146 (EPNP…GTGT) and 166–206 (SYAG…AFKR). The segment covering 181–196 (LPGTANNQTVMTTISN) has biased composition (polar residues).

It belongs to the SOSS-B family. SOSS-B2 subfamily. As to quaternary structure, component of the SOSS complex, composed of SOSS-B (SOSS-B1/NABP2 or SOSS-B2/NABP1), SOSS-A/INTS3 and SOSS-C/INIP. SOSS complexes containing SOSS-B1/NABP2 are more abundant than complexes containing SOSS-B2/NABP1.

It localises to the nucleus. Its function is as follows. Component of the SOSS complex, a multiprotein complex that functions downstream of the MRN complex to promote DNA repair and G2/M checkpoint. In the SOSS complex, acts as a sensor of single-stranded DNA that binds to single-stranded DNA, in particular to polypyrimidines. The SOSS complex associates with DNA lesions and influences diverse endpoints in the cellular DNA damage response including cell-cycle checkpoint activation, recombinational repair and maintenance of genomic stability. Required for efficient homologous recombination-dependent repair of double-strand breaks (DSBs) and ATM-dependent signaling pathways. The chain is SOSS complex subunit B2 (NABP1) from Bos taurus (Bovine).